The sequence spans 96 residues: Co-chaperonin GroES (96 aa).

It belongs to the GroES chaperonin family. In terms of assembly, heptamer of 7 subunits arranged in a ring. Interacts with the chaperonin GroEL.

It is found in the cytoplasm. Functionally, together with the chaperonin GroEL, plays an essential role in assisting protein folding. The GroEL-GroES system forms a nano-cage that allows encapsulation of the non-native substrate proteins and provides a physical environment optimized to promote and accelerate protein folding. GroES binds to the apical surface of the GroEL ring, thereby capping the opening of the GroEL channel. This chain is Co-chaperonin GroES, found in Coxiella burnetii (strain Dugway 5J108-111).